Reading from the N-terminus, the 184-residue chain is Large ribosomal subunit protein uL6 (184 aa).

It belongs to the universal ribosomal protein uL6 family. In terms of assembly, part of the 50S ribosomal subunit.

In terms of biological role, this protein binds to the 23S rRNA, and is important in its secondary structure. It is located near the subunit interface in the base of the L7/L12 stalk, and near the tRNA binding site of the peptidyltransferase center. This chain is Large ribosomal subunit protein uL6, found in Thermococcus onnurineus (strain NA1).